Here is a 796-residue protein sequence, read N- to C-terminus: Cadherin-11 (796 aa).

An N-terminal signal peptide occupies residues 1–24 (MKENYCLQAALVCLSMLYHSQAFA). Positions 25–53 (LERRSHLHPSFHGHHEKGKEGQVLQRSKR) are excised as a propeptide. 5 consecutive Cadherin domains span residues 54–159 (GWVW…PPEF), 160–268 (LHEI…PPKF), 269–383 (PQSV…PPMF), 384–486 (LAPS…DNAP), and 487–612 (KFAA…YILN). The Extracellular portion of the chain corresponds to 54 to 617 (GWVWNQFFVI…AYILNAGLST (564 aa)). N455 and N540 each carry an N-linked (GlcNAc...) asparagine glycan. Residues 618-640 (GALIAILACIVILLVIVVLFVTL) traverse the membrane as a helical segment. Residues 641 to 796 (RRQKKEPLIV…GSKDTFDDDS (156 aa)) are Cytoplasmic-facing. S788 carries the phosphoserine modification. T791 bears the Phosphothreonine mark.

Interacts with PCDH8. Selectively expressed in osteoblastic cell lines, precursor cell lines of osteoblasts, and primary osteoblastic cells from calvaria, as well as in lung, testis, and brain tissues at low levels.

The protein resides in the cell membrane. Functionally, cadherins are calcium-dependent cell adhesion proteins. They preferentially interact with themselves in a homophilic manner in connecting cells; cadherins may thus contribute to the sorting of heterogeneous cell types. Required for proper focal adhesion assembly. Involved in the regulation of cell migration. The sequence is that of Cadherin-11 (Cdh11) from Mus musculus (Mouse).